The primary structure comprises 205 residues: Snake venom metalloproteinase BmooMPalpha-I (205 aa).

Residues 8–204 form the Peptidase M12B domain; the sequence is RYIELVVVAD…HNPQCILNEP (197 aa). Ca(2+) is bound by residues E11 and D95. Cystine bridges form between C119-C199, C159-C183, and C161-C166. H144 is a binding site for Zn(2+). Residue E145 is part of the active site. Positions 148 and 154 each coordinate Zn(2+). Ca(2+)-binding residues include C199 and N202.

Belongs to the venom metalloproteinase (M12B) family. P-I subfamily. As to quaternary structure, monomer. Requires Zn(2+) as cofactor. Expressed by the venom gland.

The protein resides in the secreted. Inhibited by EDTA. Not inhibited by the serine proteinase inhibitors aprotinin and benzamidine. Functionally, snake venom zinc metalloproteinase that cleaves the alpha chain of fibrinogen (FGA) first followed by the beta chain (FGB) and shows no effect on the gamma chain. Cleaves only the beta chain of fibrin, leaving the gamma-dimer untouched. Shows proteolytic activity towards azocasein. Causes defibrinogenation when intraperitoneally administered on mice. This chain is Snake venom metalloproteinase BmooMPalpha-I, found in Bothrops moojeni (Lance-headed viper).